The sequence spans 154 residues: 6,7-dimethyl-8-ribityllumazine synthase (154 aa).

5-amino-6-(D-ribitylamino)uracil is bound by residues phenylalanine 22, alanine 56–glutamate 58, and alanine 80–isoleucine 82. Residue alanine 85 to threonine 86 coordinates (2S)-2-hydroxy-3-oxobutyl phosphate. The active-site Proton donor is histidine 88. Phenylalanine 113 is a 5-amino-6-(D-ribitylamino)uracil binding site. Arginine 127 provides a ligand contact to (2S)-2-hydroxy-3-oxobutyl phosphate.

This sequence belongs to the DMRL synthase family. In terms of assembly, forms an icosahedral capsid composed of 60 subunits, arranged as a dodecamer of pentamers.

It catalyses the reaction (2S)-2-hydroxy-3-oxobutyl phosphate + 5-amino-6-(D-ribitylamino)uracil = 6,7-dimethyl-8-(1-D-ribityl)lumazine + phosphate + 2 H2O + H(+). It participates in cofactor biosynthesis; riboflavin biosynthesis; riboflavin from 2-hydroxy-3-oxobutyl phosphate and 5-amino-6-(D-ribitylamino)uracil: step 1/2. Catalyzes the formation of 6,7-dimethyl-8-ribityllumazine by condensation of 5-amino-6-(D-ribitylamino)uracil with 3,4-dihydroxy-2-butanone 4-phosphate. This is the penultimate step in the biosynthesis of riboflavin. This is 6,7-dimethyl-8-ribityllumazine synthase from Geobacillus thermodenitrificans (strain NG80-2).